Reading from the N-terminus, the 332-residue chain is Malate dehydrogenase 1, cytoplasmic (332 aa).

Residues 16–17 (QI) and D43 each bind NAD(+). M56 carries the post-translational modification Methionine sulfoxide. G90 provides a ligand contact to NAD(+). M97 carries the post-translational modification Methionine sulfoxide. Oxaloacetate is bound at residue R99. Q113 provides a ligand contact to NAD(+). A Glycyl lysine isopeptide (Lys-Gly) (interchain with G-Cter in ubiquitin) cross-link involves residue K119. NAD(+) is bound at residue N132. 4 residues coordinate oxaloacetate: N132, R163, H188, and S243. H188 acts as the Proton acceptor in catalysis.

The protein belongs to the LDH/MDH superfamily. MDH type 2 family. Forms a homodimer. Forms a disulfide-linked homodimer upon oxidation. Interacts with 14-3-3-like proteins GRF1 GRF3 and GRF8. Interacts with TRX1, TRX2, TRX3, TRX4 and TRX5. As to expression, expressed in rosette leaves.

The protein localises to the cytoplasm. The catalysed reaction is (S)-malate + NAD(+) = oxaloacetate + NADH + H(+). With respect to regulation, decreased activity upon treatment with hydrogen peroxide. In terms of biological role, catalyzes a reversible NAD-dependent dehydrogenase reaction involved in central metabolism and redox homeostasis between organellar compartments. This is Malate dehydrogenase 1, cytoplasmic (MDH1) from Arabidopsis thaliana (Mouse-ear cress).